The sequence spans 238 residues: CD63 antigen (238 aa).

At 2 to 11 the chain is on the cytoplasmic side; sequence AVEGGMKCVK. A helical transmembrane segment spans residues 12–32; the sequence is FLLYVLLLAFCACAVGLIAVG. Residues 33–51 lie on the Extracellular side of the membrane; it reads VGAQLVLSQTIIQGATPGS. A helical membrane pass occupies residues 52 to 72; that stretch reads LLPVVIIAVGVFLFLVAFVGC. Residues 73–81 are Cytoplasmic-facing; it reads CGACKENYC. The chain crosses the membrane as a helical span at residues 82 to 102; it reads LMITFAIFLSLIMLVEVAAAI. The Extracellular segment spans residues 103–203; it reads AGYVFRDKVM…KIGGWLRKNV (101 aa). N130, N150, and N172 each carry an N-linked (GlcNAc...) asparagine glycan. Residues 204-224 traverse the membrane as a helical segment; sequence LVVAAAALGIAFVEVLGIVFA. At 225–238 the chain is on the cytoplasmic side; the sequence is CCLVKSIRSGYEVM. A Lysosomal targeting motif motif is present at residues 234–238; that stretch reads GYEVM.

Belongs to the tetraspanin (TM4SF) family. As to quaternary structure, interacts with TIMP1 and ITGB1 and recruits TIMP1 to ITGB1. Interacts with CD9. Identified in a complex with CD9 and ITGB3. Interacts with PMEL. Interacts with KDR/VEGFR2; identified in a complex with ITGB1 and KDR/VEGFR2 and is required to recruit KDR to ITGB1 complexes. Interacts with SYT7. Post-translationally, palmitoylated at a low, basal level in unstimulated platelets. The level of palmitoylation increases when platelets are activated by thrombin (in vitro). As to expression, detected in platelets (at protein level). Dysplastic nevi, radial growth phase primary melanomas, hematopoietic cells, tissue macrophages.

The protein localises to the cell membrane. Its subcellular location is the lysosome membrane. The protein resides in the late endosome membrane. It localises to the endosome. It is found in the multivesicular body. The protein localises to the melanosome. Its subcellular location is the secreted. The protein resides in the extracellular exosome. It localises to the cell surface. Functionally, functions as a cell surface receptor for TIMP1 and plays a role in the activation of cellular signaling cascades. Plays a role in the activation of ITGB1 and integrin signaling, leading to the activation of AKT, FAK/PTK2 and MAP kinases. Promotes cell survival, reorganization of the actin cytoskeleton, cell adhesion, spreading and migration, via its role in the activation of AKT and FAK/PTK2. Plays a role in VEGFA signaling via its role in regulating the internalization of KDR/VEGFR2. Plays a role in intracellular vesicular transport processes, and is required for normal trafficking of the PMEL luminal domain that is essential for the development and maturation of melanocytes. Plays a role in the adhesion of leukocytes onto endothelial cells via its role in the regulation of SELP trafficking. May play a role in mast cell degranulation in response to Ms4a2/FceRI stimulation, but not in mast cell degranulation in response to other stimuli. In Homo sapiens (Human), this protein is CD63 antigen (CD63).